Reading from the N-terminus, the 595-residue chain is Elongation factor 4 (595 aa).

Residues 2 to 183 (KNIRNFCIIA…AIVEQVPAPA (182 aa)) enclose the tr-type G domain. Residues 14-19 (DHGKST) and 130-133 (NKVD) contribute to the GTP site.

This sequence belongs to the TRAFAC class translation factor GTPase superfamily. Classic translation factor GTPase family. LepA subfamily.

The protein localises to the cell inner membrane. The enzyme catalyses GTP + H2O = GDP + phosphate + H(+). Functionally, required for accurate and efficient protein synthesis under certain stress conditions. May act as a fidelity factor of the translation reaction, by catalyzing a one-codon backward translocation of tRNAs on improperly translocated ribosomes. Back-translocation proceeds from a post-translocation (POST) complex to a pre-translocation (PRE) complex, thus giving elongation factor G a second chance to translocate the tRNAs correctly. Binds to ribosomes in a GTP-dependent manner. The polypeptide is Elongation factor 4 (Porphyromonas gingivalis (strain ATCC 33277 / DSM 20709 / CIP 103683 / JCM 12257 / NCTC 11834 / 2561)).